The chain runs to 679 residues: Glycine--tRNA ligase beta subunit (679 aa).

Belongs to the class-II aminoacyl-tRNA synthetase family. As to quaternary structure, tetramer of two alpha and two beta subunits.

It is found in the cytoplasm. The enzyme catalyses tRNA(Gly) + glycine + ATP = glycyl-tRNA(Gly) + AMP + diphosphate. This chain is Glycine--tRNA ligase beta subunit, found in Streptococcus agalactiae serotype III (strain NEM316).